Reading from the N-terminus, the 91-residue chain is Progonadoliberin-1 (91 aa).

The first 21 residues, 1-21 (MVVKTWMPWLLVSSVLSQGCC), serve as a signal peptide directing secretion. Q22 carries the pyrrolidone carboxylic acid modification. Position 31 is a glycine amide (G31).

The protein belongs to the GnRH family. As to expression, expressed in the cell bodies of a cluster of neurons in the preoptic region.

The protein resides in the secreted. Functionally, stimulates the secretion of gonadotropins. This is Progonadoliberin-1 (gnrh1) from Oryzias latipes (Japanese rice fish).